The sequence spans 752 residues: Phosphatidylinositol 4-phosphate 5-kinase 1 (752 aa).

7 MORN repeats span residues 81-103 (YIGS…DGCM), 104-126 (YEGD…SGAT), 127-149 (YEGE…DGDT), 150-172 (YRGT…NGDF), 173-195 (YEGT…NGNQ), 196-218 (YTGE…NGNR), and 219-241 (YEGL…DGSS). Positions 349 to 748 (SKGHKKYDLM…RFRDFISRIF (400 aa)) constitute a PIPK domain. Residues 708–729 (YDITKKIEHAYKSLQADPASIS) are activation loop.

In terms of processing, phosphorylation inactivates the enzyme. In terms of tissue distribution, expressed in the whole plant, preferentially in roots. Strongly expressed in meristematic tissues, namely procambial cell layers.

The catalysed reaction is a 1,2-diacyl-sn-glycero-3-phospho-(1D-myo-inositol 4-phosphate) + ATP = a 1,2-diacyl-sn-glycero-3-phospho-(1D-myo-inositol-4,5-bisphosphate) + ADP + H(+). Functionally, catalyzes the synthesis of phosphatidylinositol 4,5-bisphosphate and phosphatidylinositol 3,4-bisphosphate. In Arabidopsis thaliana (Mouse-ear cress), this protein is Phosphatidylinositol 4-phosphate 5-kinase 1 (PIP5K1).